Consider the following 698-residue polypeptide: Elongation factor G 1 (698 aa).

Residues 8–290 form the tr-type G domain; that stretch reads ERYRNIGICA…AVVEFLPAPV (283 aa). GTP is bound by residues 17–24, 88–92, and 142–145; these read AHVDAGKT, DTPGH, and NKMD.

This sequence belongs to the TRAFAC class translation factor GTPase superfamily. Classic translation factor GTPase family. EF-G/EF-2 subfamily.

It is found in the cytoplasm. Functionally, catalyzes the GTP-dependent ribosomal translocation step during translation elongation. During this step, the ribosome changes from the pre-translocational (PRE) to the post-translocational (POST) state as the newly formed A-site-bound peptidyl-tRNA and P-site-bound deacylated tRNA move to the P and E sites, respectively. Catalyzes the coordinated movement of the two tRNA molecules, the mRNA and conformational changes in the ribosome. In Shewanella sp. (strain MR-4), this protein is Elongation factor G 1.